Consider the following 1121-residue polypeptide: tRNA (34-2'-O)-methyltransferase regulator WDR6 (1121 aa).

Position 1 is an N-acetylmethionine (Met-1). WD repeat units lie at residues 53–97, 105–143, 147–189, 200–238, 247–285, 289–327, 335–376, 381–422, 425–470, 476–520, 559–598, 604–642, 645–684, 739–785, 848–893, 901–946, 970–1012, 1036–1073, and 1079–1121; these read IKRV…VVKI, WELWRSGLWNMSDWIWDARWLEGNIALALGHNSVVLYDP, CILQ…VWYP, APDRRISGHVGIIFSMSYLESKGLLATASEDRSVRIWKV, RVQNIGHCFGHSARVWQVKLLENYLISAGEDCVCLVWSH, ILQAFRGHQGRGIRAIAAHERQAWVITGGDDSGIRLWHL, LGVS…LYDV, WEQL…VVPI, PTAA…ISAA, IFVK…LFPS, PVSTLPSLHGKQGVTSVTCHGGYVYTTGRDGAYYQLFVRD, VLRQKSCRGMNWLAGLRIVPDGSMVILGFHANEFVVWNP, HEKLHIVNCGGGHRSWAFSDTEAAMAFAYLKDGDVMLYRA, LTDI…VWGI, RNRH…LFLL, QLLA…FWDL, GTPS…VFVL, EEYSVPCAHAAHVTGLKILSPSIMVSASIDQRLTFWRL, and TFMN…NWYD.

This sequence belongs to the WD repeat WDR6 family. Interacts with FTSJ1; the interaction is direct, and required for 2'-O-methylation of position 34 in substrate tRNAs. Interacts with IRS4. Interacts with STK11/LKB1. Ubiquitous.

It is found in the cytoplasm. In terms of biological role, together with methyltransferase FTSJ1, methylates the 2'-O-ribose of nucleotides at position 34 of the tRNA anticodon loop of substrate tRNAs. Required for the correct positioning of the substrate tRNA for methylation. Required to suppress amino acid starvation-induced autophagy. Enhances the STK11/LKB1-induced cell growth suppression activity. In Homo sapiens (Human), this protein is tRNA (34-2'-O)-methyltransferase regulator WDR6 (WDR6).